The primary structure comprises 654 residues: Bifunctional polymyxin resistance protein ArnA (654 aa).

The interval 1–303 is formyltransferase ArnAFT; sequence MKVIVFAYHE…NISRIKGKKL (303 aa). Residue His-105 is the Proton donor; for formyltransferase activity of the active site. (6R)-10-formyltetrahydrofolate is bound at residue 137–141; that stretch reads TKKID. The interval 313-654 is dehydrogenase ArnADH; sequence NLKKILILGV…INFFINNNTS (342 aa). NAD(+) contacts are provided by residues Asp-346 and 367–368; that span reads DI. Residues Ala-392, Tyr-397, and 431–432 contribute to the UDP-alpha-D-glucuronate site; that span reads TS. The Proton acceptor; for decarboxylase activity role is filled by Glu-433. Residues Arg-459, Asn-491, 532-534, and Tyr-612 each bind UDP-alpha-D-glucuronate; that span reads QKR. The active-site Proton donor; for decarboxylase activity is Arg-618.

This sequence in the N-terminal section; belongs to the Fmt family. UDP-L-Ara4N formyltransferase subfamily. In the C-terminal section; belongs to the NAD(P)-dependent epimerase/dehydratase family. UDP-glucuronic acid decarboxylase subfamily. As to quaternary structure, homohexamer, formed by a dimer of trimers.

The enzyme catalyses UDP-alpha-D-glucuronate + NAD(+) = UDP-beta-L-threo-pentopyranos-4-ulose + CO2 + NADH. It carries out the reaction UDP-4-amino-4-deoxy-beta-L-arabinose + (6R)-10-formyltetrahydrofolate = UDP-4-deoxy-4-formamido-beta-L-arabinose + (6S)-5,6,7,8-tetrahydrofolate + H(+). The protein operates within nucleotide-sugar biosynthesis; UDP-4-deoxy-4-formamido-beta-L-arabinose biosynthesis; UDP-4-deoxy-4-formamido-beta-L-arabinose from UDP-alpha-D-glucuronate: step 1/3. It participates in nucleotide-sugar biosynthesis; UDP-4-deoxy-4-formamido-beta-L-arabinose biosynthesis; UDP-4-deoxy-4-formamido-beta-L-arabinose from UDP-alpha-D-glucuronate: step 3/3. Its pathway is bacterial outer membrane biogenesis; lipopolysaccharide biosynthesis. Functionally, bifunctional enzyme that catalyzes the oxidative decarboxylation of UDP-glucuronic acid (UDP-GlcUA) to UDP-4-keto-arabinose (UDP-Ara4O) and the addition of a formyl group to UDP-4-amino-4-deoxy-L-arabinose (UDP-L-Ara4N) to form UDP-L-4-formamido-arabinose (UDP-L-Ara4FN). The modified arabinose is attached to lipid A and is required for resistance to polymyxin and cationic antimicrobial peptides. The polypeptide is Bifunctional polymyxin resistance protein ArnA (Wigglesworthia glossinidia brevipalpis).